Here is a 183-residue protein sequence, read N- to C-terminus: Ubiquinol-cytochrome c reductase iron-sulfur subunit (183 aa).

Residues 21 to 41 (LIYGTTAVGAVGVALAVWPFI) traverse the membrane as a helical segment. A Rieske domain is found at 88–181 (IVVARAVDPA…YAFTDDTTVL (94 aa)). [2Fe-2S] cluster contacts are provided by Cys121, His123, Cys145, and His148. An intrachain disulfide couples Cys126 to Cys147.

It belongs to the Rieske iron-sulfur protein family. As to quaternary structure, the main subunits of complex b-c1 are: cytochrome b, cytochrome c1 and the Rieske protein. The cofactor is [2Fe-2S] cluster.

It is found in the cell inner membrane. The enzyme catalyses a quinol + 2 Fe(III)-[cytochrome c](out) = a quinone + 2 Fe(II)-[cytochrome c](out) + 2 H(+)(out). Its function is as follows. Component of the ubiquinol-cytochrome c reductase complex (complex III or cytochrome b-c1 complex), which is a respiratory chain that generates an electrochemical potential coupled to ATP synthesis. This is Ubiquinol-cytochrome c reductase iron-sulfur subunit (petA) from Rhodospirillum rubrum.